The chain runs to 515 residues: Envelope glycoprotein (515 aa).

A signal peptide spans 1–33; sequence MPKERRSRRRPQPIIRWVSLTLTLLSLCQPIQT. Residues 34–435 lie on the Extracellular side of the membrane; it reads WRCSLSLGNQ…LGLTAWVRET (402 aa). Asparagine 129 and asparagine 203 each carry an N-linked (GlcNAc...) asparagine; by host glycan. Residues 212–215 carry the CXXC motif; the sequence is CAIC. 3 cysteine pairs are disulfide-bonded: cysteine 212/cysteine 215, cysteine 212/cysteine 392, and cysteine 384/cysteine 391. Asparagine 230, asparagine 251, asparagine 256, asparagine 271, and asparagine 287 each carry an N-linked (GlcNAc...) asparagine; by host glycan. The interval 304-324 is fusion peptide; that stretch reads AAALTLGLALSVGLTGINVAV. Coiled-coil stretches lie at residues 330–376 and 388–420; these read QRLT…WLYI and NEPC…DWQW. An N-linked (GlcNAc...) asparagine; by host glycan is attached at asparagine 351. The tract at residues 365 to 381 is immunosuppression; the sequence is AQNRRGLDWLYIRLGFQ. The short motif at 384–392 is the CX6CC element; sequence CPTINEPCC. Asparagine 398 carries an N-linked (GlcNAc...) asparagine; by host glycan. Residues 436–456 form a helical membrane-spanning segment; it reads IHSVLSLFLLALFLLFLAPCL. Cysteine 455 is lipidated: S-palmitoyl cysteine; by host. The Cytoplasmic portion of the chain corresponds to 457–515; that stretch reads IKCLTSRLLKLLRQAPHFPEISLAPKPDSDYQALLPSAPEIYSHLSPTKPDYINLRPCP.

As to quaternary structure, the mature envelope protein (Env) consists of a trimer of SU-TM heterodimers attached by a labile interchain disulfide bond. Post-translationally, specific enzymatic cleavages in vivo yield mature proteins. Envelope glycoproteins are synthesized as an inactive precursor that is N-glycosylated and processed likely by host cell furin or by a furin-like protease in the Golgi to yield the mature SU and TM proteins. The cleavage site between SU and TM requires the minimal sequence [KR]-X-[KR]-R. The CXXC motif is highly conserved across a broad range of retroviral envelope proteins. It is thought to participate in the formation of a labile disulfide bond possibly with the CX6CC motif present in the transmembrane protein. Isomerization of the intersubunit disulfide bond to an SU intrachain disulfide bond is thought to occur upon receptor recognition in order to allow membrane fusion. In terms of processing, the transmembrane protein is palmitoylated.

Its subcellular location is the virion membrane. The protein localises to the host cell membrane. The surface protein (SU) attaches the virus to the host cell by binding to its receptor. This interaction triggers the refolding of the transmembrane protein (TM) and is thought to activate its fusogenic potential by unmasking its fusion peptide. Fusion occurs at the host cell plasma membrane. In terms of biological role, the transmembrane protein (TM) acts as a class I viral fusion protein. Under the current model, the protein has at least 3 conformational states: pre-fusion native state, pre-hairpin intermediate state, and post-fusion hairpin state. During viral and target cell membrane fusion, the coiled coil regions (heptad repeats) assume a trimer-of-hairpins structure, positioning the fusion peptide in close proximity to the C-terminal region of the ectodomain. The formation of this structure appears to drive apposition and subsequent fusion of viral and target cell membranes. Membranes fusion leads to delivery of the nucleocapsid into the cytoplasm. In Bovine leukemia virus (isolate Belgium LB285) (BLV), this protein is Envelope glycoprotein (env).